We begin with the raw amino-acid sequence, 454 residues long: Trigger factor (454 aa).

Residues 169–261 (GDVAIADYEG…LKELKSRELP (93 aa)) enclose the PPIase FKBP-type domain.

The protein belongs to the FKBP-type PPIase family. Tig subfamily.

Its subcellular location is the cytoplasm. The catalysed reaction is [protein]-peptidylproline (omega=180) = [protein]-peptidylproline (omega=0). Involved in protein export. Acts as a chaperone by maintaining the newly synthesized protein in an open conformation. Functions as a peptidyl-prolyl cis-trans isomerase. The chain is Trigger factor from Picosynechococcus sp. (strain ATCC 27264 / PCC 7002 / PR-6) (Agmenellum quadruplicatum).